The chain runs to 256 residues: Bialaphos biosynthetic pathway regulatory protein (256 aa).

Residues 184 to 249 enclose the HTH luxR-type domain; it reads ETADAIDVSD…QLGARAAECR (66 aa). Residues 208-227 constitute a DNA-binding region (H-T-H motif); that stretch reads DVAMARSLGISTRTLRRVIT.

Functionally, involved in the regulation of the biosynthesis of phosphinothricin tripeptide (PTT), also known as bialaphos (BA), a natural-product antibiotic and potent herbicide. The chain is Bialaphos biosynthetic pathway regulatory protein (brpA) from Streptomyces hygroscopicus.